A 63-amino-acid polypeptide reads, in one-letter code: Acrosin inhibitor 1 (63 aa).

A Kazal-like domain is found at 8-63; sequence FGFPPDCKVYTEACTREYNPICDSAAKTYSNECTFCNEKMNNDADIHFNHFGECEY. Cystine bridges form between Cys14–Cys43, Cys21–Cys40, and Cys29–Cys61.

As to expression, seminal plasma.

It is found in the secreted. In terms of biological role, strong inhibitor of acrosin. This is Acrosin inhibitor 1 from Bos taurus (Bovine).